Consider the following 1209-residue polypeptide: MYIKQVIIQGFRSYRDQTIVDPFSSKHNVIVGRNGSGKSNFFYAIQFVLSDEFSHLRPEQRLALLHEGTGPRVISAFVEIIFDNSDNRLPIDKEEVSLRRVIGAKKDQYFLDKKMVTKNDVMNLLESAGFSRSNPYYIVKQGKINQMATAPDSQRLKLLREVAGTRVYDERKEESISLMKETEGKRDKINELLKYIEERLHTLEEEKEELAQYQKWDKMRRALEYTIYNQELNETRAKLDELSSKRETSGEKSRQLRDAQQDARDKMEEIERQVRELKSKISAMKEEKEQLSSERQEQIKQRTKLELKTKDLQDELAGNSEQRKRLLKERQKLLEKIEEKQKELAETEPKFSSVKQKEESGIARLAQATQERTDLYAKQGRGSQFTSKEERDKWIKKELKSLDQAINDKKRQIAAINKDLEETEVNKEKNLEQYTKLDQDLNEVKTRVEELDKKYYEVKNKKDELQSERNYLWREENAEQQSLAAKREDLEKKQQLLRAATGKAILNGIDSINKVLEHFRRKGINQHVINGYHGIVMNNFDCEPAFYTCVEVTAGNRLFYHIVESDEVSTKILMEFNKMNLPGEVTFLPLNKLDVRDTAYPETNDAIPMISKLRYNLRFDKAFKHVFGKTLICRSMEVSTQLARAFTMDCITLEGDQVSHRGALTGGYYDTRKSRLELQKDVRKVEDELHALEAKLNENLRRNIERINNEIDQLMNQMQQIETQQRKFKASRDSILSEMKMLKEKRQQSEKTFMPKQRSLQSLEASLHAMESTRESLKAELGTDLLSQLSLEDQKRVDALNDEIRQLQQENRQLLNERIKLEGTITRVETYLNENLRKRLDQVEQELNELRETEGGTVLTATTSELEAINKRVKDTLARSEGLDITIDKTEVESKDLVKSMDRWKNMEKDHMDAINHDTKELEKMTNRQGMLLKKKEECMKKIRELGSLPQEAFEKYQTLSLKQLFRKLEQCNTELKKYSHVNKKALDQFVNFSEQKEKLIKRQEELDRGHKSIMELMNVLELRKYEAIQLTFKQVSKNFSEVFQKLVPGGKATLVMKKGDVEGSQSQDEGEGSTQSSVPSVDQFTGVGIRVSFTGKQAEMREMQQLSGGQKSLVALALIFAIQKCDPAPFYLFDEIDQALDAQHRKAVSDMIMELASHAQFITTTFRPELLESADKFYGVKFRNKVSHIDVITAEQAKDFVEDDTTHG.

32 to 39 (GRNGSGKS) provides a ligand contact to ATP. An N6-acetyllysine mark is found at lysine 113 and lysine 114. 2 coiled-coil regions span residues 179-350 (MKET…TEPK) and 393-503 (KWIK…ATGK). Disordered regions lie at residues 239–269 (LDELSSKRETSGEKSRQLRDAQQDARDKMEE) and 281–303 (ISAMKEEKEQLSSERQEQIKQRT). Residues 530 to 642 (NGYHGIVMNN…CRSMEVSTQL (113 aa)) enclose the SMC hinge domain. Coiled coils occupy residues 670–857 (DTRK…EGGT) and 958–989 (QTLSLKQLFRKLEQCNTELKKYSHVNKKALDQ). Positions 1061-1082 (DVEGSQSQDEGEGSTQSSVPSV) are disordered. Polar residues predominate over residues 1064 to 1082 (GSQSQDEGEGSTQSSVPSV).

The protein belongs to the SMC family. SMC3 subfamily. In terms of assembly, forms a heterodimer with SMC1 in cohesin complex. The cohesin complex is composed of the SMC1 and SMC3 heterodimer attached via their SMC hinge domain, RAD21 which link them, and one STAG protein (STAG1 or STAG2), which interacts with RAD21. Post-translationally, acetylation at Lys-113 and Lys-114 by ESCO1 is important for genome stability and S phase sister chromatid cohesion.

The protein localises to the nucleus. It is found in the chromosome. The protein resides in the centromere. In terms of biological role, central component of cohesin, a complex required for chromosome cohesion during the cell cycle. The cohesin complex may form a large proteinaceous ring within which sister chromatids can be trapped. At anaphase, the complex is cleaved and dissociates from chromatin, allowing sister chromatids to segregate. Cohesion is coupled to DNA replication and is involved in DNA repair. The cohesin complex also plays an important role in spindle pole assembly during mitosis and in chromosomes movement. This Xenopus laevis (African clawed frog) protein is Structural maintenance of chromosomes protein 3 (smc3).